Here is a 285-residue protein sequence, read N- to C-terminus: Flagellar filament 30.7 kDa core protein (285 aa).

The protein belongs to the bacterial flagellin family. The core of the flagellum consists of several antigenically related polypeptides. In terms of processing, glycosylated. Glycosylation is not essential for motility.

It localises to the periplasmic flagellum. Its subcellular location is the periplasm. In terms of biological role, component of the core of the flagella. In Treponema maltophilum, this protein is Flagellar filament 30.7 kDa core protein (flaB3).